The primary structure comprises 287 residues: uncharacterized protein (287 aa).

Basic and acidic residues predominate over residues 1 to 17 (MRWQGRRESDNVEDRRN). The disordered stretch occupies residues 1-29 (MRWQGRRESDNVEDRRNSSGGPSMGGPGF). The chain crosses the membrane as a helical span at residues 38-60 (LILLIVVLVAGYYGVDLTGLMTG).

The protein resides in the membrane. This is an uncharacterized protein from Escherichia coli O6:H1 (strain CFT073 / ATCC 700928 / UPEC).